Consider the following 174-residue polypeptide: Ribosome maturation factor RimM (174 aa).

Residues 98 to 171 (EDEYYFHEII…TIKIHIMEGL (74 aa)) form the PRC barrel domain.

It belongs to the RimM family. Binds ribosomal protein uS19.

It localises to the cytoplasm. In terms of biological role, an accessory protein needed during the final step in the assembly of 30S ribosomal subunit, possibly for assembly of the head region. Essential for efficient processing of 16S rRNA. May be needed both before and after RbfA during the maturation of 16S rRNA. It has affinity for free ribosomal 30S subunits but not for 70S ribosomes. This Bacillus licheniformis (strain ATCC 14580 / DSM 13 / JCM 2505 / CCUG 7422 / NBRC 12200 / NCIMB 9375 / NCTC 10341 / NRRL NRS-1264 / Gibson 46) protein is Ribosome maturation factor RimM.